Reading from the N-terminus, the 783-residue chain is Outer membrane usher protein FanD (783 aa).

Residues 1–23 form the signal peptide; the sequence is MNRKKHQILKILLLCLISSKSSA. A disulfide bridge connects residues cysteine 763 and cysteine 782.

The protein belongs to the fimbrial export usher family.

It localises to the cell outer membrane. Functionally, involved in the export and assembly of K99 fimbrial subunits across the outer membrane. The polypeptide is Outer membrane usher protein FanD (fanD) (Escherichia coli).